Consider the following 594-residue polypeptide: Trehalase (594 aa).

The first 27 residues, Met-1 to Ser-27, serve as a signal peptide directing secretion. Residues Asn-56, Asn-70, Asn-97, and Asn-166 are each glycosylated (N-linked (GlcNAc...) asparagine). Residues Arg-190, Trp-197–Asp-198, and Asn-234 contribute to the substrate site. Residue Asn-242 is glycosylated (N-linked (GlcNAc...) asparagine). Arg-243–Gln-245 contacts substrate. Residues Asn-261 and Asn-305 are each glycosylated (N-linked (GlcNAc...) asparagine). Residues Arg-312–Glu-314 and Gly-346 contribute to the substrate site. The active-site Proton donor/acceptor is Asp-348. Asn-361, Asn-395, Asn-513, and Asn-537 each carry an N-linked (GlcNAc...) asparagine glycan. Glu-549 acts as the Proton donor/acceptor in catalysis. Glu-564 contributes to the substrate binding site.

The protein belongs to the glycosyl hydrolase 37 family.

The catalysed reaction is alpha,alpha-trehalose + H2O = alpha-D-glucose + beta-D-glucose. This is Trehalase (treh) from Dictyostelium discoideum (Social amoeba).